The primary structure comprises 251 residues: Leucine-rich repeat and calponin homology domain-containing protein 1 (251 aa).

Residues 73 to 97 (SNGSEYSPNEIRANSPAISPTANST) form a disordered region. Phosphoserine is present on residues S87 and S91. Positions 88-97 (PAISPTANST) are enriched in polar residues. A Phosphothreonine modification is found at T123. A Calponin-homology (CH) domain is found at 131–244 (MREEKELVEH…ITVQALLDVT (114 aa)).

As to quaternary structure, interacts (via LRR repeats) with unphosphorylated DOCK8 (via DHR-2 domain); the interaction prevents the interaction between DOCK8 and CDC42.

The protein localises to the cytoplasm. Its function is as follows. Acts as a negative regulator of GTPase CDC42 by sequestering CDC42-guanine exchange factor DOCK8. Probably by preventing CDC42 activation, negatively regulates CD4(+) T-cell migration. The protein is Leucine-rich repeat and calponin homology domain-containing protein 1 of Felis catus (Cat).